We begin with the raw amino-acid sequence, 736 residues long: Oxysterol-binding protein-related protein 9 (736 aa).

An N-acetylalanine modification is found at alanine 2. One can recognise a PH domain in the interval 2 to 99 (ASIMEGPLSK…WIHALEETIL (98 aa)). The segment at 231–367 (KSEQRPSSLP…DRDDDAEAGS (137 aa)) is disordered. The span at 253 to 290 (TPTPNSTGSGHSPPSSSLTSPSHVNLSPNTVPEFSYSS) shows a compositional bias: low complexity. Phosphoserine occurs at positions 306, 324, 325, 326, and 329. 2 stretches are compositionally biased toward polar residues: residues 314 to 329 (SSGS…SGNS) and 336 to 347 (TESLNSSLSNGT). The residue at position 611 (serine 611) is a Phosphoserine.

This sequence belongs to the OSBP family. Heterodimer with OSBPL11. Interacts with OSBPL10. As to expression, widely expressed.

It localises to the late endosome membrane. It is found in the golgi apparatus. The protein localises to the trans-Golgi network membrane. The catalysed reaction is a 1,2-diacyl-sn-glycero-3-phospho-(1D-myo-inositol 4-phosphate)(out) + a 1,2-diacyl-sn-glycero-3-phospho-L-serine(in) = a 1,2-diacyl-sn-glycero-3-phospho-(1D-myo-inositol 4-phosphate)(in) + a 1,2-diacyl-sn-glycero-3-phospho-L-serine(out). In terms of biological role, interacts with OSBPL11 to function as lipid transfer proteins. Together they form a heterodimer that localizes at the ER-trans-Golgi membrane contact sites, and exchanges phosphatidylserine (1,2-diacyl-sn-glycero-3-phospho-L-serine, PS) for phosphatidylinositol-4-phosphate (1,2-diacyl-sn-glycero-3-phospho-(1D-myo-inositol 4-phosphate), PI(4)P) between the two organelles, a step that is critical for sphingomyelin synthesis in the Golgi complex. In Homo sapiens (Human), this protein is Oxysterol-binding protein-related protein 9 (OSBPL9).